The sequence spans 192 residues: Mediator of RNA polymerase II transcription subunit 29 (192 aa).

The segment at 32–51 is disordered; sequence MQQQSPQQMQPAPVPQQTQQ.

It belongs to the Mediator complex subunit 29 family. As to quaternary structure, component of the Mediator complex.

It localises to the nucleus. In terms of biological role, component of the Mediator complex, a coactivator involved in the regulated transcription of nearly all RNA polymerase II-dependent genes. Mediator functions as a bridge to convey information from gene-specific regulatory proteins to the basal RNA polymerase II transcription machinery. Mediator is recruited to promoters by direct interactions with regulatory proteins and serves as a scaffold for the assembly of a functional preinitiation complex with RNA polymerase II and the general transcription factors. In Bombyx mori (Silk moth), this protein is Mediator of RNA polymerase II transcription subunit 29 (ix).